The sequence spans 175 residues: Crossover junction endodeoxyribonuclease RuvC (175 aa).

Active-site residues include aspartate 16, glutamate 76, and aspartate 148. Residues aspartate 16, glutamate 76, and aspartate 148 each coordinate Mg(2+).

This sequence belongs to the RuvC family. Homodimer which binds Holliday junction (HJ) DNA. The HJ becomes 2-fold symmetrical on binding to RuvC with unstacked arms; it has a different conformation from HJ DNA in complex with RuvA. In the full resolvosome a probable DNA-RuvA(4)-RuvB(12)-RuvC(2) complex forms which resolves the HJ. The cofactor is Mg(2+).

Its subcellular location is the cytoplasm. The enzyme catalyses Endonucleolytic cleavage at a junction such as a reciprocal single-stranded crossover between two homologous DNA duplexes (Holliday junction).. Functionally, the RuvA-RuvB-RuvC complex processes Holliday junction (HJ) DNA during genetic recombination and DNA repair. Endonuclease that resolves HJ intermediates. Cleaves cruciform DNA by making single-stranded nicks across the HJ at symmetrical positions within the homologous arms, yielding a 5'-phosphate and a 3'-hydroxyl group; requires a central core of homology in the junction. The consensus cleavage sequence is 5'-(A/T)TT(C/G)-3'. Cleavage occurs on the 3'-side of the TT dinucleotide at the point of strand exchange. HJ branch migration catalyzed by RuvA-RuvB allows RuvC to scan DNA until it finds its consensus sequence, where it cleaves and resolves the cruciform DNA. In Bradyrhizobium sp. (strain BTAi1 / ATCC BAA-1182), this protein is Crossover junction endodeoxyribonuclease RuvC.